Reading from the N-terminus, the 295-residue chain is N-acetylmuramic acid 6-phosphate etherase (295 aa).

The region spanning 54–217 (VIASFRQGGR…STASMIGIGK (164 aa)) is the SIS domain. Glutamate 82 functions as the Proton donor in the catalytic mechanism. Glutamate 113 is a catalytic residue.

Belongs to the GCKR-like family. MurNAc-6-P etherase subfamily. In terms of assembly, homodimer.

The enzyme catalyses N-acetyl-D-muramate 6-phosphate + H2O = N-acetyl-D-glucosamine 6-phosphate + (R)-lactate. It participates in amino-sugar metabolism; N-acetylmuramate degradation. Specifically catalyzes the cleavage of the D-lactyl ether substituent of MurNAc 6-phosphate, producing GlcNAc 6-phosphate and D-lactate. The protein is N-acetylmuramic acid 6-phosphate etherase of Geobacillus sp. (strain WCH70).